The following is a 197-amino-acid chain: Adenylyl-sulfate kinase (197 aa).

33 to 40 (GLSGSGKS) contributes to the ATP binding site. Ser-107 functions as the Phosphoserine intermediate in the catalytic mechanism.

Belongs to the APS kinase family.

The catalysed reaction is adenosine 5'-phosphosulfate + ATP = 3'-phosphoadenylyl sulfate + ADP + H(+). It participates in sulfur metabolism; hydrogen sulfide biosynthesis; sulfite from sulfate: step 2/3. Its function is as follows. Catalyzes the synthesis of activated sulfate. The sequence is that of Adenylyl-sulfate kinase from Bacillus velezensis (strain DSM 23117 / BGSC 10A6 / LMG 26770 / FZB42) (Bacillus amyloliquefaciens subsp. plantarum).